A 930-amino-acid polypeptide reads, in one-letter code: Xanthan lyase (930 aa).

The N-terminal stretch at 1–25 (MLSGILIAALLMTLWGGWQPDIAHA) is a signal peptide. Xanthan contacts are provided by residues 146–148 (NWW), histidine 246, tyrosine 255, arginine 309, 313–315 (RSY), and asparagine 424. Tyrosine 255 (proton donor/acceptor) is an active-site residue. The Ca(2+) site is built by aspartate 515, aspartate 516, and glutamate 517. Residue arginine 612 coordinates xanthan. A Ca(2+)-binding site is contributed by glutamate 676.

The protein belongs to the polysaccharide lyase 8 family. Monomer.

The protein localises to the secreted. It carries out the reaction Eliminative cleavage of the terminal beta-D-mannosyl-(1-&gt;4)-beta-D-glucuronosyl linkage of the side-chain of the polysaccharide xanthan, leaving a 4-deoxy-alpha-L-threo-hex-4-enuronosyl group at the terminus of the side-chain.. Its activity is regulated as follows. Activated by Co(2+) at 1 mM. Completely inhibited by Hg(2+) but not affected by other divalent cations. Intensely inhibited by NaCl and KCl at 150 mM, in particular by the Na(+) and K(+) ions but not the Cl(-) ions. Partially inhibited by iodoacetamide and N-ethylmaleimide at 1 mM but not by dithiothreitol, reduced glutathione or 2-mercaptoethanol. Functionally, plays a role in xanthan depolymerization pathway by cleaving the linkage between the terminal mannosyl and glucuronyl residues of the side chain of xanthan to liberate pyruvylated mannose. Is highly specific for pyruvylated side-chains of xanthan and is not effective with hyaluronate, chondroitin A, gellan, heparin or pectin. The chain is Xanthan lyase from Bacillus sp. (strain GL1).